Consider the following 343-residue polypeptide: Mating-type protein MAT-2 (343 aa).

Disordered regions lie at residues 98-117 and 177-223; these read RSPQ…SEQT and KKPW…AAMT. Low complexity predominate over residues 99 to 117; the sequence is SPQVVSSPQSAQTSPSEQT. The segment at residues 131–199 is a DNA-binding region (HMG box); sequence APRPMNCWII…EHLRQHPNYK (69 aa). Positions 206–218 are enriched in basic residues; it reads GEKKKRQSRKSKR.

The protein resides in the nucleus. This Cochliobolus heterostrophus (Southern corn leaf blight fungus) protein is Mating-type protein MAT-2 (MAT2).